A 496-amino-acid polypeptide reads, in one-letter code: Acyltransferase clz6 (496 aa).

Catalysis depends on His-163, which acts as the Proton acceptor.

Belongs to the plant acyltransferase family. Monomer.

It participates in secondary metabolite biosynthesis. Functionally, acyltransferase; part of the gene cluster that mediates the biosynthesis of squalestatin S1 (SQS1, also known as zaragozic acid A), a heavily oxidized fungal polyketide that offers potent cholesterol lowering activity by targeting squalene synthase (SS). SQS1 is composed of a 2,8-dioxobicyclic[3.2.1]octane-3,4,5-tricarboxyclic acid core that is connected to two lipophilic polyketide arms. These initial steps feature the priming of an unusual benzoic acid starter unit onto the highly reducing polyketide synthase clz14, followed by oxaloacetate extension and product release to generate a tricarboxylic acid containing product. The phenylalanine ammonia lyase (PAL) clz10 and the acyl-CoA ligase clz12 are involved in transforming phenylalanine into benzoyl-CoA. The citrate synthase-like protein clz17 is involved in connecting the C-alpha-carbons of the hexaketide chain and oxaloacetate to afford the tricarboxylic acid unit. The potential hydrolytic enzymes, clz11 and clz13, are in close proximity to pks2 and may participate in product release. On the other side, the tetraketide arm is synthesized by a the squalestatin tetraketide synthase clz2 and enzymatically esterified to the core in the last biosynthetic step, by the acetyltransferase clz6. The biosynthesis of the tetraketide must involve 3 rounds of chain extension. After the first and second rounds methyl-transfer occurs, and in all rounds of extension the ketoreductase and dehydratase are active. The enoyl reductase and C-MeT of clz2 are not active in the final round of extension. The acetyltransferase clz6 appears to have a broad substrate selectivity for its acyl CoA substrate, allowing the in vitro synthesis of novel squalestatins. The biosynthesis of SQS1 requires several oxidative steps likely performed by oxidoreductases clz3, clz15 and clz16. Finally, in support of the identification of the cluster as being responsible for SQS1 production, the cluster contains a gene encoding a putative squalene synthase (SS) clz20, suggesting a likely mechanism for self-resistance. The sequence is that of Acyltransferase clz6 from Cochliobolus lunatus (Filamentous fungus).